The primary structure comprises 441 residues: tRNA(Ile)-lysidine synthase (441 aa).

Position 27–32 (27–32) interacts with ATP; that stretch reads SGGVDS.

The protein belongs to the tRNA(Ile)-lysidine synthase family.

Its subcellular location is the cytoplasm. It catalyses the reaction cytidine(34) in tRNA(Ile2) + L-lysine + ATP = lysidine(34) in tRNA(Ile2) + AMP + diphosphate + H(+). Ligates lysine onto the cytidine present at position 34 of the AUA codon-specific tRNA(Ile) that contains the anticodon CAU, in an ATP-dependent manner. Cytidine is converted to lysidine, thus changing the amino acid specificity of the tRNA from methionine to isoleucine. The polypeptide is tRNA(Ile)-lysidine synthase (Proteus mirabilis (strain HI4320)).